The sequence spans 516 residues: Ribose import ATP-binding protein RbsA (516 aa).

2 ABC transporter domains span residues 14–250 and 261–504; these read LRLT…VGRA and AKGA…AGIG. Position 46–53 (46–53) interacts with ATP; the sequence is GENGAGKS.

The protein belongs to the ABC transporter superfamily. Ribose importer (TC 3.A.1.2.1) family. In terms of assembly, the complex is composed of an ATP-binding protein (RbsA), two transmembrane proteins (RbsC) and a solute-binding protein (RbsB).

The protein resides in the cell inner membrane. The enzyme catalyses D-ribose(out) + ATP + H2O = D-ribose(in) + ADP + phosphate + H(+). In terms of biological role, part of the ABC transporter complex RbsABC involved in ribose import. Responsible for energy coupling to the transport system. The polypeptide is Ribose import ATP-binding protein RbsA (Jannaschia sp. (strain CCS1)).